The following is a 174-amino-acid chain: Large ribosomal subunit protein uL5 (174 aa).

Belongs to the universal ribosomal protein uL5 family. As to quaternary structure, part of the 50S ribosomal subunit; contacts the 5S rRNA and probably tRNA. Forms a bridge to the 30S subunit in the 70S ribosome.

Its function is as follows. This is one of the proteins that bind and probably mediate the attachment of the 5S RNA into the large ribosomal subunit, where it forms part of the central protuberance. In the 70S ribosome it contacts protein S13 of the 30S subunit (bridge B1b), connecting the 2 subunits; this bridge is implicated in subunit movement. May contact the P site tRNA; the 5S rRNA and some of its associated proteins might help stabilize positioning of ribosome-bound tRNAs. The chain is Large ribosomal subunit protein uL5 from Halorubrum lacusprofundi (strain ATCC 49239 / DSM 5036 / JCM 8891 / ACAM 34).